The following is a 336-amino-acid chain: Prenytransferase ascA (336 aa).

The tract at residues 1–26 (MAAKSRSPKRGTSEKTPLVEKEAPYQ) is disordered. Residues 11 to 23 (GTSEKTPLVEKEA) are compositionally biased toward basic and acidic residues. 8 helical membrane-spanning segments follow: residues 52–72 (PHGN…ASAI), 74–94 (PTEL…TFLM), 131–151 (GHVF…SLPI), 179–199 (VILG…VGLP), 206–226 (FVPT…YDVV), 251–271 (LEGL…TLGY), 272–292 (LVGM…FGLV), and 314–334 (FAIL…DYVV).

Belongs to the UbiA prenyltransferase family. It depends on Mg(2+) as a cofactor.

It is found in the membrane. The enzyme catalyses orsellinate + (2E,6E)-farnesyl diphosphate = ilicicolinate B + diphosphate. The protein operates within secondary metabolite biosynthesis; terpenoid biosynthesis. Prenytransferase; part of the asc-1 gene cluster that mediates the biosynthesis of both ascochlorin and ascofuranone, a strong inhibitor of cyanide-insensitive alternative oxidases and a promising drug candidate against African trypanosomiasis. The first step in the pathway is performed by the non-reducing polyketide synthase ascC that produces orsellinic acid by condensing acetyl-CoA with 3 malonyl-CoA units. Orsellinic acid is then prenylated by the prenyltransferase ascA to yield ilicicolinic acid B. Ilicicolinic acid B is further reduced to ilicicolin B by the reductase ascB. The halogenase ascD then chlorinates ilicicolin B to produce ilicicolin A which is converted to ilicicolin A epoxide by the cytochrome P450 monooxygenase ascE that catalyzes stereoselective epoxidation of the terminal double bond of the prenyl group. Ilicicolin A epoxide is the last common precursor for the biosynthesis of ascofuranone and ascochlorin. The terpene cyclase ascF produces a monocyclic terpene, and the cyclization reaction is proposed to be initiated by protonation of the terminal epoxide of ilicicolin A epoxide to generate a monocyclic tertiarycation, which is followed by a series of hydride and methyl shifts with abstraction of proton, leading to the formation of the (14S,15R,19R)-trimethylcyclohexanone ring structure of ilicicolin C, which is finally reduced to ascochlorin by the dehydrogenase ascG. On the other hand, ilicicolin A epoxide is hydroxylated by the cytochrome P450 monooxygenase ascH, and the resultant product is cyclized by the terpene cyclase ascI to ascofuranol via protonation-initiated epoxide ring opening, which facilitates the 6-endo-tet cyclization to form the tetrahy-drofuran ring. Finally, ascofuranol is oxidized into ascofuranone by ascJ. This Acremonium egyptiacum (Oospora egyptiaca) protein is Prenytransferase ascA.